The following is a 176-amino-acid chain: ATP-dependent protease subunit HslV (176 aa).

The active site involves Thr-2. The Na(+) site is built by Ser-157, Cys-160, and Thr-163.

This sequence belongs to the peptidase T1B family. HslV subfamily. In terms of assembly, a double ring-shaped homohexamer of HslV is capped on each side by a ring-shaped HslU homohexamer. The assembly of the HslU/HslV complex is dependent on binding of ATP.

The protein resides in the cytoplasm. It carries out the reaction ATP-dependent cleavage of peptide bonds with broad specificity.. With respect to regulation, allosterically activated by HslU binding. Protease subunit of a proteasome-like degradation complex believed to be a general protein degrading machinery. The sequence is that of ATP-dependent protease subunit HslV from Buchnera aphidicola subsp. Baizongia pistaciae (strain Bp).